Here is a 1031-residue protein sequence, read N- to C-terminus: Translation initiation factor IF-2 (1031 aa).

Disordered regions lie at residues 33–369 (KSHS…GDVL) and 388–436 (LKPL…AESL). Residues 45 to 56 (ELVRSKLSEPRV) are compositionally biased toward basic and acidic residues. Low complexity predominate over residues 96 to 105 (PAPAQQQAAA). The segment covering 108 to 123 (ASSSKPSPQRPDQLSS) has biased composition (polar residues). Positions 148 to 171 (PAAQEPQPAAASTRPEAAAKAGSP) are enriched in low complexity. Residues 184-200 (VLPPPRRAASGPEPPQR) show a composition bias toward pro residues. The span at 250 to 281 (TRPEPRSPVAKKEESSDSGKADEAPRPQRRLE) shows a compositional bias: basic and acidic residues. Pro residues predominate over residues 286-299 (PTRPVAKPLPPEPD). Residues 419 to 435 (RPSASAEATAPEAAAES) show a composition bias toward low complexity. Positions 522–695 (PRPPVVTIMG…LLVADVAELQ (174 aa)) constitute a tr-type G domain. Residues 531–538 (GHVDHGKT) form a G1 region. 531–538 (GHVDHGKT) is a binding site for GTP. The segment at 556–560 (GITQR) is G2. A G3 region spans residues 581–584 (DTPG). Residues 581-585 (DTPGH) and 635-638 (NKID) each bind GTP. The tract at residues 635–638 (NKID) is G4. Positions 671–673 (SAL) are G5.

This sequence belongs to the TRAFAC class translation factor GTPase superfamily. Classic translation factor GTPase family. IF-2 subfamily.

It localises to the cytoplasm. One of the essential components for the initiation of protein synthesis. Protects formylmethionyl-tRNA from spontaneous hydrolysis and promotes its binding to the 30S ribosomal subunits. Also involved in the hydrolysis of GTP during the formation of the 70S ribosomal complex. This is Translation initiation factor IF-2 from Synechococcus sp. (strain JA-3-3Ab) (Cyanobacteria bacterium Yellowstone A-Prime).